A 314-amino-acid polypeptide reads, in one-letter code: 4-hydroxy-3-methylbut-2-enyl diphosphate reductase (314 aa).

[4Fe-4S] cluster is bound at residue C12. H41 and H74 together coordinate (2E)-4-hydroxy-3-methylbut-2-enyl diphosphate. The dimethylallyl diphosphate site is built by H41 and H74. Isopentenyl diphosphate is bound by residues H41 and H74. A [4Fe-4S] cluster-binding site is contributed by C96. H124 contributes to the (2E)-4-hydroxy-3-methylbut-2-enyl diphosphate binding site. H124 is a binding site for dimethylallyl diphosphate. Residue H124 participates in isopentenyl diphosphate binding. The active-site Proton donor is E126. (2E)-4-hydroxy-3-methylbut-2-enyl diphosphate is bound at residue T167. Position 197 (C197) interacts with [4Fe-4S] cluster. Positions 225, 226, 227, and 269 each coordinate (2E)-4-hydroxy-3-methylbut-2-enyl diphosphate. Residues S225, S226, N227, and S269 each coordinate dimethylallyl diphosphate. The isopentenyl diphosphate site is built by S225, S226, N227, and S269.

The protein belongs to the IspH family. [4Fe-4S] cluster serves as cofactor.

The catalysed reaction is isopentenyl diphosphate + 2 oxidized [2Fe-2S]-[ferredoxin] + H2O = (2E)-4-hydroxy-3-methylbut-2-enyl diphosphate + 2 reduced [2Fe-2S]-[ferredoxin] + 2 H(+). The enzyme catalyses dimethylallyl diphosphate + 2 oxidized [2Fe-2S]-[ferredoxin] + H2O = (2E)-4-hydroxy-3-methylbut-2-enyl diphosphate + 2 reduced [2Fe-2S]-[ferredoxin] + 2 H(+). It functions in the pathway isoprenoid biosynthesis; dimethylallyl diphosphate biosynthesis; dimethylallyl diphosphate from (2E)-4-hydroxy-3-methylbutenyl diphosphate: step 1/1. Its pathway is isoprenoid biosynthesis; isopentenyl diphosphate biosynthesis via DXP pathway; isopentenyl diphosphate from 1-deoxy-D-xylulose 5-phosphate: step 6/6. Functionally, catalyzes the conversion of 1-hydroxy-2-methyl-2-(E)-butenyl 4-diphosphate (HMBPP) into a mixture of isopentenyl diphosphate (IPP) and dimethylallyl diphosphate (DMAPP). Acts in the terminal step of the DOXP/MEP pathway for isoprenoid precursor biosynthesis. In Histophilus somni (strain 2336) (Haemophilus somnus), this protein is 4-hydroxy-3-methylbut-2-enyl diphosphate reductase.